We begin with the raw amino-acid sequence, 1064 residues long: Lysine-specific demethylase 4A (1064 aa).

Alanine 2 carries the N-acetylalanine modification. In terms of domain architecture, JmjN spans 14 to 56 (IMTFYPTMEEFRNFSRYIAYIESQGAHRAGLAKVVPPKEWKPR). Tyrosine 132 is a 2-oxoglutarate binding site. One can recognise a JmjC domain in the interval 142-308 (EKHVDEWNIG…YGKQAVLCSC (167 aa)). Residues histidine 188 and glutamate 190 each coordinate Fe cation. 2-oxoglutarate contacts are provided by asparagine 198 and lysine 206. The Zn(2+) site is built by cysteine 234 and histidine 240. A 2-oxoglutarate-binding site is contributed by lysine 241. Histidine 276 serves as a coordination point for Fe cation. Residues cysteine 306 and cysteine 308 each contribute to the Zn(2+) site. Disordered regions lie at residues 358–384 (ELPPRAGNEEECPEDDMEGVEDGEEGD), 501–537 (FSGSKKKSSSSLGSGSSRDSVSSDSETSEPLSCRAQG), and 616–642 (SDDETSEQLTPEEEAEETEAWAKPLSQ). Acidic residues predominate over residues 366–382 (EEECPEDDMEGVEDGEE). Over residues 509–532 (SSSLGSGSSRDSVSSDSETSEPLS) the composition is skewed to low complexity. Serine 523 carries the post-translational modification Phosphoserine. The interval 597-638 (RQPLSKLPRHHPLVLQECVSDDETSEQLTPEEEAEETEAWAK) is interaction with NCOR1. A compositionally biased stretch (acidic residues) spans 616 to 634 (SDDETSEQLTPEEEAEETE). The segment at 709–767 (MCFTSTGCGTDINLSTPYLEEDGTSILVSCKKCSVRVHASCYGVPPAKASEDWMCSRCS) adopts a PHD-type 1 zinc-finger fold. The segment at 772–805 (EEDCCLCSLRGGALQRANDDRWVHVSCAVAILEA) adopts a C2HC pre-PHD-type zinc-finger fold. A PHD-type 2 zinc finger spans residues 828–885 (LKCIFCKKRRKRTAGCCVQCSHGRCPTAFHVSCAQAAGVMMQPDDWPFVVFITCFRHK). Tudor domains lie at 897–954 (QSIT…CLQF) and 955–1011 (GPPA…EELP).

Belongs to the JHDM3 histone demethylase family. Interacts with histone deacetylase proteins HDAC1, HDAC2 and HDAC3. Interacts with RB and NCOR1. Interacts with VRK1. Requires Fe(2+) as cofactor. In terms of processing, ubiquitinated by RNF8 and RNF168, leading to its degradation. Degradation promotes accessibility of H4K20me2 mark for DNA repair protein TP53BP1, which is then recruited. Also ubiquitinated by the SCF(FBXO22) complex; leading to proteasomal degradation.

It localises to the nucleus. The catalysed reaction is N(6),N(6),N(6)-trimethyl-L-lysyl(9)-[histone H3] + 2 2-oxoglutarate + 2 O2 = N(6)-methyl-L-lysyl(9)-[histone H3] + 2 formaldehyde + 2 succinate + 2 CO2. It carries out the reaction N(6),N(6),N(6)-trimethyl-L-lysyl(36)-[histone H3] + 2 2-oxoglutarate + 2 O2 = N(6)-methyl-L-lysyl(36)-[histone H3] + 2 formaldehyde + 2 succinate + 2 CO2. In terms of biological role, histone demethylase that specifically demethylates 'Lys-9' and 'Lys-36' residues of histone H3, thereby playing a central role in histone code. Does not demethylate histone H3 'Lys-4', H3 'Lys-27' nor H4 'Lys-20'. Demethylates trimethylated H3 'Lys-9' and H3 'Lys-36' residue, while it has no activity on mono- and dimethylated residues. Demethylation of Lys residue generates formaldehyde and succinate. Participates in transcriptional repression of ASCL2 and E2F-responsive promoters via the recruitment of histone deacetylases and NCOR1, respectively. The sequence is that of Lysine-specific demethylase 4A (KDM4A) from Pongo abelii (Sumatran orangutan).